A 525-amino-acid chain; its full sequence is GMP synthase [glutamine-hydrolyzing] (525 aa).

In terms of domain architecture, Glutamine amidotransferase type-1 spans Thr-12 to Ser-203. The active-site Nucleophile is Cys-89. Residues His-177 and Glu-179 contribute to the active site. The region spanning Trp-204 to Arg-399 is the GMPS ATP-PPase domain. Residue Ser-231–Ala-237 participates in ATP binding.

As to quaternary structure, homodimer.

It catalyses the reaction XMP + L-glutamine + ATP + H2O = GMP + L-glutamate + AMP + diphosphate + 2 H(+). It functions in the pathway purine metabolism; GMP biosynthesis; GMP from XMP (L-Gln route): step 1/1. Catalyzes the synthesis of GMP from XMP. The chain is GMP synthase [glutamine-hydrolyzing] from Streptomyces avermitilis (strain ATCC 31267 / DSM 46492 / JCM 5070 / NBRC 14893 / NCIMB 12804 / NRRL 8165 / MA-4680).